The primary structure comprises 357 residues: GTPase Obg (357 aa).

An Obg domain is found at 1 to 159; that stretch reads MKFVDEAFID…RNLKLELKVL (159 aa). Residues 160 to 334 enclose the OBG-type G domain; the sequence is ADVGLLGMPN…LIQAIYQHVR (175 aa). GTP is bound by residues 166-173, 191-195, 213-216, 284-287, and 315-317; these read GMPNAGKS, FTTLH, DIPG, NKLD, and SAL. Residues serine 173 and threonine 193 each contribute to the Mg(2+) site.

Belongs to the TRAFAC class OBG-HflX-like GTPase superfamily. OBG GTPase family. Monomer. Mg(2+) is required as a cofactor.

The protein resides in the cytoplasm. Its function is as follows. An essential GTPase which binds GTP, GDP and possibly (p)ppGpp with moderate affinity, with high nucleotide exchange rates and a fairly low GTP hydrolysis rate. Plays a role in control of the cell cycle, stress response, ribosome biogenesis and in those bacteria that undergo differentiation, in morphogenesis control. The protein is GTPase Obg of Paracidovorax citrulli (strain AAC00-1) (Acidovorax citrulli).